We begin with the raw amino-acid sequence, 424 residues long: CinA-like protein (424 aa).

The protein belongs to the CinA family.

The protein is CinA-like protein of Shewanella amazonensis (strain ATCC BAA-1098 / SB2B).